A 240-amino-acid chain; its full sequence is Ribonuclease PH (240 aa).

Residues R87 and 125 to 127 (GTR) contribute to the phosphate site.

This sequence belongs to the RNase PH family. Homohexameric ring arranged as a trimer of dimers.

It carries out the reaction tRNA(n+1) + phosphate = tRNA(n) + a ribonucleoside 5'-diphosphate. Phosphorolytic 3'-5' exoribonuclease that plays an important role in tRNA 3'-end maturation. Removes nucleotide residues following the 3'-CCA terminus of tRNAs; can also add nucleotides to the ends of RNA molecules by using nucleoside diphosphates as substrates, but this may not be physiologically important. Probably plays a role in initiation of 16S rRNA degradation (leading to ribosome degradation) during starvation. The polypeptide is Ribonuclease PH (Pseudomonas fluorescens (strain SBW25)).